We begin with the raw amino-acid sequence, 449 residues long: Na(+)-translocating NADH-quinone reductase subunit A (449 aa).

The protein belongs to the NqrA family. In terms of assembly, composed of six subunits; NqrA, NqrB, NqrC, NqrD, NqrE and NqrF.

The catalysed reaction is a ubiquinone + n Na(+)(in) + NADH + H(+) = a ubiquinol + n Na(+)(out) + NAD(+). Its function is as follows. NQR complex catalyzes the reduction of ubiquinone-1 to ubiquinol by two successive reactions, coupled with the transport of Na(+) ions from the cytoplasm to the periplasm. NqrA to NqrE are probably involved in the second step, the conversion of ubisemiquinone to ubiquinol. The sequence is that of Na(+)-translocating NADH-quinone reductase subunit A from Serratia proteamaculans (strain 568).